The sequence spans 421 residues: Lipid II:glycine glycyltransferase (421 aa).

It belongs to the FemABX family. In terms of assembly, monomer.

It is found in the cytoplasm. It carries out the reaction beta-D-GlcNAc-(1-&gt;4)-Mur2Ac(oyl-L-Ala-D-isoglutaminyl-L-Lys-D-Ala-D-Ala)-di-trans,octa-cis-undecaprenyl diphosphate + glycyl-tRNA(Gly) = beta-D-GlcNAc-(1-&gt;4)-Mur2Ac(oyl-L-Ala-D-isoglutaminyl-L-Lys-(N(6)-Gly)-D-Ala-D-Ala)-di-trans,octa-cis-undecaprenyl diphosphate + tRNA(Gly) + H(+). Its function is as follows. Catalyzes the incorporation of the first glycine of the pentaglycine interpeptide bridge, which is characteristic of the S.aureus peptidoglycan. This glycine is added to the epsilon-amino group of the L-lysine of the membrane-bound lipid II intermediate (GlcNAc-(beta-1,4)-N-acetylmuramic acid(-L-Ala-D-iGln-L-Lys-D-Ala-D-Ala)-pyrophosphoryl-undecaprenol), using glycyl-tRNA(Gly) as donor, in a ribosome-independent mechanism. Involved in methicillin resistance. In Staphylococcus aureus (strain Mu50 / ATCC 700699), this protein is Lipid II:glycine glycyltransferase (femX).